The sequence spans 200 residues: Protein C2-DOMAIN ABA-RELATED 5 (200 aa).

The C2 domain occupies 22-142 (VAGEKHKDRR…LKMHLHDLPS (121 aa)). Residues Arg57, Asp58, Asp63, Asp109, Tyr110, Asp111, and Asp117 each coordinate Ca(2+).

The protein belongs to the plant CAR protein family. As to quaternary structure, binds to PYR/PYL/RCAR abscisic acid intracellular receptors in an ABA-independent manner, both at the plasma membrane and in the nucleus.

It is found in the cell membrane. The protein localises to the nucleus. In terms of biological role, stimulates the GTPase/ATPase activities of Obg-like ATPases. Mediates the transient calcium-dependent interaction of PYR/PYL/RCAR abscisic acid (ABA) receptors with the plasma membrane and thus regulates ABA sensitivity. This Arabidopsis thaliana (Mouse-ear cress) protein is Protein C2-DOMAIN ABA-RELATED 5.